The primary structure comprises 416 residues: UDP-N-acetylglucosamine 1-carboxyvinyltransferase (416 aa).

22 to 23 (KN) lines the phosphoenolpyruvate pocket. Arg91 contributes to the UDP-N-acetyl-alpha-D-glucosamine binding site. Cys115 serves as the catalytic Proton donor. Position 115 is a 2-(S-cysteinyl)pyruvic acid O-phosphothioketal (Cys115). UDP-N-acetyl-alpha-D-glucosamine contacts are provided by residues 120–124 (RPIDL), Asp303, and Ile325.

The protein belongs to the EPSP synthase family. MurA subfamily.

It localises to the cytoplasm. It carries out the reaction phosphoenolpyruvate + UDP-N-acetyl-alpha-D-glucosamine = UDP-N-acetyl-3-O-(1-carboxyvinyl)-alpha-D-glucosamine + phosphate. It functions in the pathway cell wall biogenesis; peptidoglycan biosynthesis. In terms of biological role, cell wall formation. Adds enolpyruvyl to UDP-N-acetylglucosamine. This is UDP-N-acetylglucosamine 1-carboxyvinyltransferase from Lawsonia intracellularis (strain PHE/MN1-00).